Reading from the N-terminus, the 426-residue chain is Glutamate-1-semialdehyde 2,1-aminomutase (426 aa).

At Lys265 the chain carries N6-(pyridoxal phosphate)lysine.

Belongs to the class-III pyridoxal-phosphate-dependent aminotransferase family. HemL subfamily. Homodimer. It depends on pyridoxal 5'-phosphate as a cofactor.

The protein resides in the cytoplasm. It carries out the reaction (S)-4-amino-5-oxopentanoate = 5-aminolevulinate. The protein operates within porphyrin-containing compound metabolism; protoporphyrin-IX biosynthesis; 5-aminolevulinate from L-glutamyl-tRNA(Glu): step 2/2. This chain is Glutamate-1-semialdehyde 2,1-aminomutase, found in Klebsiella pneumoniae (strain 342).